The primary structure comprises 224 residues: Cytidylate kinase (224 aa).

14-22 contacts ATP; the sequence is GPAGSGKST.

It belongs to the cytidylate kinase family. Type 1 subfamily.

Its subcellular location is the cytoplasm. The enzyme catalyses CMP + ATP = CDP + ADP. It carries out the reaction dCMP + ATP = dCDP + ADP. The protein is Cytidylate kinase of Mycoplasmoides gallisepticum (strain R(low / passage 15 / clone 2)) (Mycoplasma gallisepticum).